The chain runs to 1226 residues: E3 ubiquitin-protein ligase mind-bomb (1226 aa).

Over residues 1 to 12 (MSCAATLSSAKD) the composition is skewed to polar residues. 2 disordered regions span residues 1–42 (MSCA…NTNT) and 66–87 (GGGG…AGGV). The segment covering 19-30 (SGGGGGGGGGGA) has biased composition (gly residues). Low complexity-rich tracts occupy residues 31–42 (PTNSNTNTNTNT) and 73–86 (GGTT…AAGG). One can recognise an MIB/HERC2 1 domain in the interval 100–168 (VRRFSMEGVG…AYDLRILDSA (69 aa)). A ZZ-type zinc finger spans residues 174–226 (HEGTMCDTCRQQPIFGIRWKCAECINYDLCSICYHGDKHHLRHRFYRITTPGG). 8 residues coordinate Zn(2+): Cys179, Cys182, Cys194, Cys197, Cys203, Cys206, His212, and His216. Residues 237-315 (SKKVLARGIF…MADLKVVNDA (79 aa)) form the MIB/HERC2 2 domain. ANK repeat units lie at residues 567–596 (AGHT…DVEI), 600–629 (DGDR…DLNA), 633–662 (RRQT…HPSL), 666–695 (EGDT…DITL), 699–731 (NGFN…IVEE), 735–765 (DGYT…NMDR), 769–798 (NLQT…DLNI), and 802–833 (DGDT…KLLM). A disordered region spans residues 890–919 (TDDSELPGNVAGTSSSARARAASGSLNQSS). The span at 900–914 (AGTSSSARARAASGS) shows a compositional bias: low complexity. 2 RING-type zinc fingers span residues 970–1005 (CLVC…LICR) and 1017–1052 (CLVC…VLCR). Residues 1159-1181 (VNNFQMDDVQKLKQQLQDIKEQT) adopt a coiled-coil conformation. An RING-type 3 zinc finger spans residues 1183-1216 (CPVCFDRIKNMVFLCGHGTCQMCGDQIEGCPICR).

Interacts with intracellular domain of Dl and Ser. In terms of tissue distribution, ubiquitous in the wing imaginal disk (at protein level).

The protein resides in the cytoplasm. The protein localises to the cell cortex. It carries out the reaction S-ubiquitinyl-[E2 ubiquitin-conjugating enzyme]-L-cysteine + [acceptor protein]-L-lysine = [E2 ubiquitin-conjugating enzyme]-L-cysteine + N(6)-ubiquitinyl-[acceptor protein]-L-lysine.. Its pathway is protein modification; protein ubiquitination. Functionally, E3 ubiquitin-protein ligase that mediates ubiquitination of Delta (Dl) and Serrate (Ser) receptors, which act as ligands of Notch proteins. Positively regulates the Notch signaling by ubiquitinating the intracellular domain of Dl and Ser, leading to endocytosis of Dl and Ser receptors. Regulates a subset of Notch signaling events, including wing margin specification, leg segmentation and vein determination, that are distinct from those events requiring neuralize (neur) activity. Also modulates lateral inhibition, a neur- and Dl-dependent signaling event, suggesting a distinct but partially complementary function with neur. This Drosophila melanogaster (Fruit fly) protein is E3 ubiquitin-protein ligase mind-bomb (mib1).